The primary structure comprises 183 residues: Extracellular superoxide dismutase [Cu-Zn] (183 aa).

Residues methionine 1–arginine 32 form the signal peptide. Residue asparagine 63 is glycosylated (N-linked (GlcNAc...) asparagine). The Cu cation site is built by histidine 77, histidine 79, and histidine 94. A disulfide bridge connects residues cysteine 88 and cysteine 177. Residues histidine 94, histidine 102, histidine 111, and aspartate 114 each contribute to the Zn(2+) site. Cu cation is bound at residue histidine 151.

Belongs to the Cu-Zn superoxide dismutase family. Cu cation serves as cofactor. The cofactor is Zn(2+).

The protein resides in the secreted. It is found in the extracellular space. The enzyme catalyses 2 superoxide + 2 H(+) = H2O2 + O2. Functionally, destroys radicals which are normally produced within the cells and which are toxic to biological systems. In Haemonchus contortus (Barber pole worm), this protein is Extracellular superoxide dismutase [Cu-Zn] (SOD).